The primary structure comprises 86 residues: Small ribosomal subunit protein uS17 (86 aa).

Belongs to the universal ribosomal protein uS17 family. As to quaternary structure, part of the 30S ribosomal subunit.

One of the primary rRNA binding proteins, it binds specifically to the 5'-end of 16S ribosomal RNA. The polypeptide is Small ribosomal subunit protein uS17 (Desulfotalea psychrophila (strain LSv54 / DSM 12343)).